The chain runs to 645 residues: Zinc finger protein 64 (645 aa).

3 C2H2-type zinc fingers span residues 175-197 (HKCE…MRCH), 203-225 (YKCK…LRIH), and 231-253 (FKCQ…LRSH). Glu286 is covalently cross-linked (Glycyl lysine isopeptide (Lys-Gly) (interchain with G-Cter in SUMO2)). The segment at 299 to 324 (FNCCYPGCHFKTVHGMKDLDRHLRIH) adopts a C2H2-type 4; atypical zinc-finger fold. C2H2-type zinc fingers lie at residues 330–352 (HKCE…MRCH), 358–380 (HKCH…LRIH), 386–408 (YKCQ…LRSH), 414–436 (FQCW…MIVH), 442–465 (FKCE…RIKH), 467–489 (FKCL…SRLH), 495–517 (EKCP…SRVH), 523–546 (FKCD…DKVH), and 580–602 (FRCE…KKQH). A Glycyl lysine isopeptide (Lys-Gly) (interchain with G-Cter in SUMO2) cross-link involves residue Asn397. Composition is skewed to basic and acidic residues over residues 543 to 554 (DKVHRDEAKTEN) and 600 to 610 (KQHSDQSENKN). Disordered stretches follow at residues 543-567 (DKVH…REGS) and 600-645 (KQHS…SQDL). At Val545 the chain carries Phosphoserine. Polar residues predominate over residues 622 to 631 (ASGQLSTLVS).

The protein belongs to the krueppel C2H2-type zinc-finger protein family. Interacts with ZNF70; this interaction promote the transactivation of the HES1 gene. Interacts with NOTCH1.

The protein localises to the nucleus. Its function is as follows. May be involved in the regulation of mesenchymal cell differentiation through transactivation of NOTCH1 target genes. The sequence is that of Zinc finger protein 64 from Homo sapiens (Human).